The following is a 151-amino-acid chain: MRFLAATFLLLALSTAAQAEPVQFKDCGSVDGVIKEVNVSPCPTQPCQLSKGQSYSVNVTFTSNIQSKSSKAVVHGILMGVPVPFPIPEPDGCKSGINCPIQKDKTYSYLNKLPVKSEYPSIKLVVEWQLQDDKNQSLFCWEIPVQIVSHL.

Positions 1 to 19 (MRFLAATFLLLALSTAAQA) are cleaved as a signal peptide. 3 cysteine pairs are disulfide-bonded: Cys27-Cys140, Cys42-Cys47, and Cys93-Cys99. An N-linked (GlcNAc...) asparagine glycan is attached at Asn58. Lys116 bears the N6-acetyllysine mark. N-linked (GlcNAc...) asparagine glycosylation is present at Asn135.

This sequence belongs to the NPC2 family. As to quaternary structure, interacts with NPC1 (via the second lumenal domain) in a cholestrol-dependent manner. Interacts with NUS1/NgBR, the interaction stabilizes NCP2 and regulates cholesterol trafficking. Interacts with DHDDS. Interacts with NEDD4L (via C2 domain). Interacts with NPC1L1. As to expression, detected in gallbladder bile. Detected in fibroblasts, kidney, liver, spleen, small intestine, placenta and testis (at protein level). Epididymis.

It is found in the secreted. The protein localises to the endoplasmic reticulum. It localises to the lysosome. It catalyses the reaction cholesterol(in) = cholesterol(out). In terms of biological role, intracellular cholesterol transporter which acts in concert with NPC1 and plays an important role in the egress of cholesterol from the lysosomal compartment. Unesterified cholesterol that has been released from LDLs in the lumen of the late endosomes/lysosomes is transferred by NPC2 to the cholesterol-binding pocket in the N-terminal domain of NPC1. May bind and mobilize cholesterol that is associated with membranes. NPC2 binds cholesterol with a 1:1 stoichiometry. Can bind a variety of sterols, including lathosterol, desmosterol and the plant sterols stigmasterol and beta-sitosterol. The secreted form of NCP2 regulates biliary cholesterol secretion via stimulation of ABCG5/ABCG8-mediated cholesterol transport. This is NPC intracellular cholesterol transporter 2 from Homo sapiens (Human).